Consider the following 581-residue polypeptide: Prolactin receptor (581 aa).

A signal peptide spans 1–24; it reads MKENAASRVLFILLLFLFASLLNG. Residues 25 to 237 lie on the Extracellular side of the membrane; sequence QSPPEKPKLI…NDFPVKDTSM (213 aa). 2 Fibronectin type-III domains span residues 27–127 and 129–229; these read PPEK…IVEP and PPVN…IPND. An intrachain disulfide couples C36 to C46. A glycan (N-linked (GlcNAc...) asparagine) is linked at N59. A disulfide bridge connects residues C75 and C86. N-linked (GlcNAc...) asparagine glycosylation is present at N132. The Zn(2+) site is built by D211 and H212. Positions 215–219 match the WSXWS motif motif; the sequence is WSEWS. A helical membrane pass occupies residues 238-258; sequence WIFVGVLSAVICLIMVWAVAL. At 259 to 581 the chain is on the cytoplasmic side; it reads KGYSMVTCIL…SAKKAPPALP (323 aa). A Box 1 motif motif is present at residues 267 to 275; sequence ILPPVPGPK. Composition is skewed to basic and acidic residues over residues 323 to 349 and 375 to 388; these read QHLM…DTDS and HIPE…DPET. Disordered stretches follow at residues 323 to 388 and 462 to 492; these read QHLM…DPET and FKPS…PDQD.

This sequence belongs to the type I cytokine receptor family. Type 1 subfamily. Interacts with SMARCA1. Interacts with NEK3 and VAV2 and this interaction is prolactin-dependent. In terms of tissue distribution, expressed in all tissues examined; liver, pituitary, adrenal gland, ovary and fetal liver.

Its subcellular location is the membrane. Functionally, this is a receptor for the anterior pituitary hormone prolactin. The protein is Prolactin receptor (PRLR) of Ovis aries (Sheep).